The sequence spans 150 residues: Thyroid hormone-inducible hepatic protein (150 aa).

The disordered stretch occupies residues 83-105 (KVAGNEGSEAENEAAETEEAEED). Serine 90 carries the phosphoserine modification. Residues 90–105 (SEAENEAAETEEAEED) show a composition bias toward acidic residues.

It belongs to the SPOT14 family. Homodimer. Heterodimer with MID1IP1. Interacts with THRB and PLAGL1. Highly expressed in liver, lactating mammary gland, epididymal, retroperitoneal and brown fat. Mainly expressed in tissues that synthesize triglycerides.

Its subcellular location is the nucleus. It is found in the cytoplasm. Functionally, plays a role in the regulation of lipogenesis, especially in lactating mammary gland. Important for the biosynthesis of triglycerides with medium-length fatty acid chains. May modulate lipogenesis by interacting with MID1IP1 and preventing its interaction with ACACA. May function as transcriptional coactivator. May modulate the transcription factor activity of THRB. The sequence is that of Thyroid hormone-inducible hepatic protein (Thrsp) from Rattus norvegicus (Rat).